A 94-amino-acid chain; its full sequence is Protein translocase subunit SecE (94 aa).

A disordered region spans residues 1 to 32 (MTDAVGSIDMPDAQDEAPDSKKSRKGGKRGKK). The segment covering 22–32 (KSRKGGKRGKK) has biased composition (basic residues). The chain crosses the membrane as a helical span at residues 65 to 85 (TVVIIFVVIMIGLVTLIDYGF).

The protein belongs to the SecE/SEC61-gamma family. As to quaternary structure, component of the Sec protein translocase complex. Heterotrimer consisting of SecY, SecE and SecG subunits. The heterotrimers can form oligomers, although 1 heterotrimer is thought to be able to translocate proteins. Interacts with the ribosome. Interacts with SecDF, and other proteins may be involved. Interacts with SecA.

The protein resides in the cell membrane. Functionally, essential subunit of the Sec protein translocation channel SecYEG. Clamps together the 2 halves of SecY. May contact the channel plug during translocation. In Streptomyces coelicolor (strain ATCC BAA-471 / A3(2) / M145), this protein is Protein translocase subunit SecE.